Consider the following 114-residue polypeptide: Kininogen-2 (114 aa).

Positions 1 to 23 (MRLWFCLSFFIVLCLEHFPGTLA) are cleaved as a signal peptide. Positions 35–45 (TRLHGHHKPSR) are enriched in basic residues. A disordered region spans residues 35-114 (TRLHGHHKPS…QIPGLGPLRG (80 aa)). Positions 65 to 80 (PESEEKTEQFLRDLPK) are enriched in basic and acidic residues. Position 113 is an arginine amide (Arg-113).

Belongs to the bradykinin-related peptide family. In terms of tissue distribution, expressed by the skin glands.

The protein resides in the secreted. Its function is as follows. Potent vasodilator. Binds B1 (BDKRB1) and B2 (BDKRB2) bradykinin receptors. The chain is Kininogen-2 from Bombina maxima (Giant fire-bellied toad).